The chain runs to 162 residues: Ribosome-binding factor A (162 aa).

The tract at residues 123-162 is disordered; that stretch reads VARVAAGASPAGDPDPYKEPRVEDADDAEVDEPSRSRQAD. The segment covering 125–136 has biased composition (low complexity); it reads RVAAGASPAGDP.

Belongs to the RbfA family. Monomer. Binds 30S ribosomal subunits, but not 50S ribosomal subunits or 70S ribosomes.

The protein localises to the cytoplasm. Its function is as follows. One of several proteins that assist in the late maturation steps of the functional core of the 30S ribosomal subunit. Associates with free 30S ribosomal subunits (but not with 30S subunits that are part of 70S ribosomes or polysomes). Required for efficient processing of 16S rRNA. May interact with the 5'-terminal helix region of 16S rRNA. The chain is Ribosome-binding factor A from Rhodococcus opacus (strain B4).